Here is a 436-residue protein sequence, read N- to C-terminus: 3-ketoacyl-CoA thiolase (436 aa).

Residue cysteine 99 is the Acyl-thioester intermediate of the active site. Catalysis depends on proton acceptor residues histidine 392 and cysteine 422.

It belongs to the thiolase-like superfamily. Thiolase family. In terms of assembly, heterotetramer of two alpha chains (FadJ) and two beta chains (FadI).

The protein localises to the cytoplasm. The enzyme catalyses an acyl-CoA + acetyl-CoA = a 3-oxoacyl-CoA + CoA. It participates in lipid metabolism; fatty acid beta-oxidation. Catalyzes the final step of fatty acid oxidation in which acetyl-CoA is released and the CoA ester of a fatty acid two carbons shorter is formed. The chain is 3-ketoacyl-CoA thiolase from Shewanella loihica (strain ATCC BAA-1088 / PV-4).